The chain runs to 305 residues: Oxidoreductase swnR (305 aa).

The protein belongs to the NmrA-type oxidoreductase family. Isoflavone reductase subfamily.

It carries out the reaction L-pipecolate + O2 = L-1-piperideine-6-carboxylate + H2O2 + H(+). The protein operates within mycotoxin biosynthesis. Functionally, oxidoreductase; part of the gene cluster that mediates the biosynthesis of swainsonine (SW), a cytotoxic fungal alkaloid and a potential cancer therapy drug. Swainsonine production occurs via a multibranched pathway and is dispensable for fungal colonization of plants and infection of insect hosts. The first step of swainsonine biosynthesis is the production of the precursor pipecolic acid (PA) via conversion of L-lysine (Lys) to 1-piperideine-6-carboxylate (P6C) by the aminotransferase swnA, the latter being further reduced to PA by the reductase swnR. The PKS-NRPS hybrid synthetase swnK uptakes and condensates PA and malonyl-CoA with and without skipping of the ketoreductase (KR) domain in order to produce 3 intermediates, 1-oxoindolizidine, (1S)-1-hydroxyindolizin, and (1R)-1-hydroxyindolizine; with the transisomer (1S)-1-hydroxyindolizin being predominant. The terminal thioester reductase (TE) domain of swnK is involved in reduction of the thioester bond to release the intermediate aldehydes. The oxidoreductase swnN could contribute to the reduction of 1-oxoindolizidine to (1S)-1-hydroxyindolizin and (1R)-1-hydroxyindolizine, contributing to the major route of SW production. The dioxygenase swnH2 would be responsible for the oxidization of (1R)-1-hydroxyindolizine into (1R,2S)-1,2-dihydroxyindolizine and of (1S)-1-hydroxyindolizin to yield both (1R,2S)-1,2-dihydroxyindolizine and (1S,2S)-1,2-dihydroxyindolizine. The dioxygenase swnH1 then performs the conversion of the 1,2-dihydroxyindolizine epimers to SW. This is Oxidoreductase swnR from Arthroderma benhamiae (strain ATCC MYA-4681 / CBS 112371) (Trichophyton mentagrophytes).